The following is a 1404-amino-acid chain: DNA-directed RNA polymerase subunit beta' (1404 aa).

4 residues coordinate Zn(2+): Cys70, Cys72, Cys85, and Cys88. Mg(2+)-binding residues include Asp460, Asp462, and Asp464. Cys814, Cys888, Cys895, and Cys898 together coordinate Zn(2+).

It belongs to the RNA polymerase beta' chain family. As to quaternary structure, the RNAP catalytic core consists of 2 alpha, 1 beta, 1 beta' and 1 omega subunit. When a sigma factor is associated with the core the holoenzyme is formed, which can initiate transcription. Mg(2+) is required as a cofactor. Zn(2+) serves as cofactor.

It carries out the reaction RNA(n) + a ribonucleoside 5'-triphosphate = RNA(n+1) + diphosphate. Its function is as follows. DNA-dependent RNA polymerase catalyzes the transcription of DNA into RNA using the four ribonucleoside triphosphates as substrates. The protein is DNA-directed RNA polymerase subunit beta' of Buchnera aphidicola subsp. Baizongia pistaciae (strain Bp).